The chain runs to 242 residues: MGVEKVPKYDIPTKKVDYVFIELDKMKPHEQLVQKELEAFIESVTGSGIFWKPMLLAKVPGEDMYLIVDGHHRWAGLQKLGAKRAPSVILDYFSDDVKVYTWYPAFKGDLNEVVERLKKEGLEVIEDPEAEEKAERGEIAFALVGEKSFAIPGGLEEQKKVSKVLDEMSVEGKIELIYYGLKEDAREDMAKGEIDYVFIRKAPTKEEVMELVKRGEVYSPKTTRHVLPFNPDKIDVKLEELF.

The active site involves E30. Residues S43, I49, W51, and K52 each coordinate ADP. V68 serves as a coordination point for O-phospho-L-serine. Positions 69, 70, 71, 72, and 73 each coordinate ADP. Residue D69 participates in Mg(2+) binding. Residues G70, H71, and H72 each contribute to the O-phospho-L-serine site. O-phospho-L-serine-binding residues include W102, K221, T223, and H225.

It belongs to the SerK family. Mg(2+) serves as cofactor.

The catalysed reaction is L-serine + ADP = O-phospho-L-serine + AMP + H(+). It participates in amino-acid biosynthesis; L-cysteine biosynthesis; L-cysteine from L-serine: step 1/2. Functionally, free serine kinase that uses ADP to phosphorylate L-serine to yield O-phospho-L-serine and AMP. This Thermococcus kodakarensis (strain ATCC BAA-918 / JCM 12380 / KOD1) (Pyrococcus kodakaraensis (strain KOD1)) protein is ADP-dependent L-serine kinase SerK.